Reading from the N-terminus, the 414-residue chain is Cytochrome P450 GfsF (414 aa).

A disordered region spans residues methionine 1–proline 32. Positions 75, 107, 111, 303, 361, and 363 each coordinate heme b.

The protein belongs to the cytochrome P450 family. In terms of assembly, monomer. Heme b is required as a cofactor.

The protein operates within antibiotic biosynthesis. Involved in the synthesis of the 16-membered macrolide antibiotics FD-891 and FD-892. Consecutively catalyzes epoxidation of C8-C9 and then hydroxylation at C10 to convert 25-O-methyl-FD-892 to FD-891. Consecutively catalyzes epoxidation of C8-C9 and then hydroxylation at C10 to convert 8,9-epoxy-FD-892 to 25-O-demethyl-FD-891 as well as converting 25-oxo-FD-892 to 8,9-epoxy-25-oxo-FD-892 and 8,9-epoxy-10-hydroxy-25-oxo-FD-892. In vitro is furnished with P.putida putidaredoxin and putidaredoxin reductase to provide the required two-electron reduction. This chain is Cytochrome P450 GfsF, found in Streptomyces halstedii.